Consider the following 210-residue polypeptide: Large ribosomal subunit protein uL4 (210 aa).

Belongs to the universal ribosomal protein uL4 family. Part of the 50S ribosomal subunit.

In terms of biological role, one of the primary rRNA binding proteins, this protein initially binds near the 5'-end of the 23S rRNA. It is important during the early stages of 50S assembly. It makes multiple contacts with different domains of the 23S rRNA in the assembled 50S subunit and ribosome. Functionally, forms part of the polypeptide exit tunnel. In Orientia tsutsugamushi (strain Boryong) (Rickettsia tsutsugamushi), this protein is Large ribosomal subunit protein uL4.